The chain runs to 273 residues: Bis(5'-nucleosyl)-tetraphosphatase, symmetrical (273 aa).

Belongs to the Ap4A hydrolase family.

It carries out the reaction P(1),P(4)-bis(5'-adenosyl) tetraphosphate + H2O = 2 ADP + 2 H(+). Hydrolyzes diadenosine 5',5'''-P1,P4-tetraphosphate to yield ADP. The protein is Bis(5'-nucleosyl)-tetraphosphatase, symmetrical of Proteus mirabilis (strain HI4320).